A 1066-amino-acid chain; its full sequence is MEGLLHYINPAHAISLLSALNEERLKGQLCDVLLIVGDQKFRAHKNVLAASSEYFQSLFTNKENESQTVFQLDFCEPDAFDNVLNYIYSSSLFVEKSSLAAVQELGYSLGISFLTNIVSKTPQAPFPTCPNRKKVFVEDDENSSQKRSVIVCQSRNEAQGKTVSQNQPDVSHTSRPSPSIAVKANTNKPHVPKPIEPLHNLSLTEKSWPKDSSVVYAKSLEHSGSLDDPNRISLVKRNAVLPSKPLQDREAMDDKPGVSGQLPKGKALELALKRPRPPVLSVCSSSETPYLLKETNKGNGQGEDRNLLYYSKLGLVIPSSGSGSGNQSIDRSGPLVKSLLRRSLSMDSQVPVYSPSIDLKSSQGSSSVSSDAPGNVLCALSQKSSLKDCSEKTALDDRPQVLQPHRLRSFSASQSTDREGASPVTEVRIKTEPSSPLSDPSDIIRVTVGDAATTAAASSSSVTRDLSLKTEDDQKDMSRLPAKRRFQADRRLPFKKLKVNEHGSPVSEDNFEEGSSPTLLDADFPDSDLNKDEFGELEGTRPNKKFKCKHCLKIFRSTAGLHRHVNMYHNPEKPYACDICHKRFHTNFKVWTHCQTQHGIVKNPSPASSSHAVLDEKFQRKLIDIVREREIKKALIIKLRRGKPGFQGQSSSQAQQVIKRNLRSRAKGAYICTYCGKAYRFLSQFKQHIKMHPGEKPLGVNKVAKPKEHAPLASPVENKEVYQCRLCNAKLSSLLEQGSHERLCRNAAVCPYCSLRFFSPELKQEHESKCEYKKLTCLECMRTFKSSFSIWRHQVEVHNQNNMAPTENFSLPVLDHNGDVTGSSRPQSQPEPNKVNHIVTTKDDNVFSDSSEQVNFDSEDSSCLPEDLSLSKQLKIQVKEEPVEEAEEEAPEASTAPKEAGPSKEASLWPCEKCGKMFTVHKQLERHQELLCSVKPFICHVCNKAFRTNFRLWSHFQSHMSQASEESAHKESEVCPVPTNSPSPPPLPPPPPLPKIQPLEPDSPTGLSENPTPATEKLFVPQESDTLFYHAPPLSAITFKRQFMCKLCHRTFKTAFSLWSHEQTHN.

In terms of domain architecture, BTB spans 30 to 96 (CDVLLIVGDQ…IYSSSLFVEK (67 aa)). Positions 30-96 (CDVLLIVGDQ…IYSSSLFVEK (67 aa)) are mediates homodimerization. A Glycyl lysine isopeptide (Lys-Gly) (interchain with G-Cter in SUMO1); alternate cross-link involves residue K40. K40 participates in a covalent cross-link: Glycyl lysine isopeptide (Lys-Gly) (interchain with G-Cter in SUMO2); alternate. Positions 154–177 (SRNEAQGKTVSQNQPDVSHTSRPS) are enriched in polar residues. A disordered region spans residues 154 to 196 (SRNEAQGKTVSQNQPDVSHTSRPSPSIAVKANTNKPHVPKPIE). Glycyl lysine isopeptide (Lys-Gly) (interchain with G-Cter in SUMO2) cross-links involve residues K255, K266, K273, K312, and K337. A phosphoserine mark is found at S345 and S381. Residue K383 forms a Glycyl lysine isopeptide (Lys-Gly) (interchain with G-Cter in SUMO2) linkage. The segment covering 388–399 (DCSEKTALDDRP) has biased composition (basic and acidic residues). 3 disordered regions span residues 388–442 (DCSE…DPSD), 454–485 (TAAA…AKRR), and 498–525 (KVNE…ADFP). S411 and S422 each carry phosphoserine. Residue K430 forms a Glycyl lysine isopeptide (Lys-Gly) (interchain with G-Cter in SUMO2) linkage. T431 carries the post-translational modification Phosphothreonine. S434, S435, and S438 each carry phosphoserine. Residues 466–478 (LSLKTEDDQKDMS) are compositionally biased toward basic and acidic residues. Glycyl lysine isopeptide (Lys-Gly) (interchain with G-Cter in SUMO2) cross-links involve residues K469 and K475. 2 C2H2-type zinc fingers span residues 546 to 569 (FKCK…NMYH) and 575 to 598 (YACD…QTQH). S605 carries the phosphoserine modification. Residues K617, K643, and K659 each participate in a glycyl lysine isopeptide (Lys-Gly) (interchain with G-Cter in SUMO2) cross-link. A C2H2-type 3 zinc finger spans residues 670–692 (YICTYCGKAYRFLSQFKQHIKMH). A Glycyl lysine isopeptide (Lys-Gly) (interchain with G-Cter in SUMO2) cross-link involves residue K702. S714 is modified (phosphoserine). The C2H2-type 4; atypical zinc finger occupies 748 to 770 (AVCPYCSLRFFSPELKQEHESKC). Glycyl lysine isopeptide (Lys-Gly) (interchain with G-Cter in SUMO2) cross-links involve residues K763 and K785. The C2H2-type 5 zinc finger occupies 775–798 (LTCLECMRTFKSSFSIWRHQVEVH). The tract at residues 806–840 (TENFSLPVLDHNGDVTGSSRPQSQPEPNKVNHIVT) is disordered. A compositionally biased stretch (polar residues) spans 820-831 (VTGSSRPQSQPE). K875 is covalently cross-linked (Glycyl lysine isopeptide (Lys-Gly) (interchain with G-Cter in SUMO2)). Residue K879 forms a Glycyl lysine isopeptide (Lys-Gly) (interchain with G-Cter in SUMO1); alternate linkage. K879 participates in a covalent cross-link: Glycyl lysine isopeptide (Lys-Gly) (interchain with G-Cter in SUMO2); alternate. The tract at residues 879-906 (KEEPVEEAEEEAPEASTAPKEAGPSKEA) is disordered. The segment covering 882–891 (PVEEAEEEAP) has biased composition (acidic residues). The segment at 909 to 932 (WPCEKCGKMFTVHKQLERHQELLC) adopts a C2H2-type 6; atypical zinc-finger fold. K935 is covalently cross-linked (Glycyl lysine isopeptide (Lys-Gly) (interchain with G-Cter in SUMO2)). The segment at 937-959 (FICHVCNKAFRTNFRLWSHFQSH) adopts a C2H2-type 7 zinc-finger fold. The interval 963–1014 (ASEESAHKESEVCPVPTNSPSPPPLPPPPPLPKIQPLEPDSPTGLSENPTPA) is disordered. Residues 979–995 (TNSPSPPPLPPPPPLPK) show a composition bias toward pro residues. A Phosphoserine modification is found at S1003. Residues 1043-1065 (FMCKLCHRTFKTAFSLWSHEQTH) form a C2H2-type 8 zinc finger.

Homodimer. Interacts with ZBTB14. Ubiquitous in fetal and adult tissues.

The protein resides in the nucleus. Its function is as follows. Acts as a transcription repressor. The protein is Zinc finger and BTB domain-containing protein 21 (ZBTB21) of Homo sapiens (Human).